Reading from the N-terminus, the 728-residue chain is Leucine-rich repeat and calponin homology domain-containing protein 1 (728 aa).

Positions 24-36 are enriched in basic residues; sequence HHPHHHHHHHQHH. Residues 24-57 are disordered; that stretch reads HHPHHHHHHHQHHGGTGAPGGAGGGGGGSGGFNL. Gly residues predominate over residues 37 to 54; it reads GGTGAPGGAGGGGGGSGG. 9 LRR repeats span residues 98 to 119, 121 to 143, 144 to 166, 167 to 187, 189 to 210, 212 to 234, 235 to 255, 257 to 278, and 283 to 304; these read DTVQ…LCHF, SLEI…VNLQ, MLTY…CGLP, LKVL…IGQL, QLME…IGQL, SLRE…VDLS, LVKF…FREM, QLQV…ICTK, and IFKY…YLHT. The span at 311–322 shows a compositional bias: basic and acidic residues; that stretch reads HQHVEDGKKDSD. The segment at 311–348 is disordered; sequence HQHVEDGKKDSDSGVGSDNGDKRLSATEPSDEDTVSLN. Phosphoserine is present on S370. The tract at residues 377–398 is disordered; it reads HQEFQPEPSLLGDSTNSGEERD. Phosphoserine is present on S409. The span at 516-525 shows a compositional bias: polar residues; it reads LQSNGSQYSP. A disordered region spans residues 516 to 547; it reads LQSNGSQYSPNEIRENSPAVSPTTNSTAPFGL. A phosphoserine mark is found at S532 and S536. The span at 533–543 shows a compositional bias: polar residues; the sequence is PAVSPTTNSTA. T568 is modified (phosphothreonine). The Calponin-homology (CH) domain occupies 576–692; that stretch reads MREEKELVEQ…TLLALGEKAP (117 aa).

As to quaternary structure, interacts (via LRR repeats) with unphosphorylated DOCK8 (via DHR-2 domain); the interaction prevents the interaction between DOCK8 and CDC42.

Its subcellular location is the cytoplasm. In terms of biological role, acts as a negative regulator of GTPase CDC42 by sequestering CDC42-guanine exchange factor DOCK8. Probably by preventing CDC42 activation, negatively regulates CD4(+) T-cell migration. This chain is Leucine-rich repeat and calponin homology domain-containing protein 1 (LRCH1), found in Homo sapiens (Human).